A 195-amino-acid chain; its full sequence is Holliday junction branch migration complex subunit RuvA (195 aa).

The segment at 1 to 66 (MNYLVFKVIY…LIIKDLYGFR (66 aa)) is domain I. The segment at 67–141 (TYNERLLFID…KYINKVSEKN (75 aa)) is domain II. A region of interest (flexible linker) is located at residue Asn141. Positions 141 to 195 (NPWAKELSIGLENLGYDKKDIEYAITKVKVDTQQNIDISEIIGCAIKEISLRHEN) are domain III.

This sequence belongs to the RuvA family. Homotetramer. Forms an RuvA(8)-RuvB(12)-Holliday junction (HJ) complex. HJ DNA is sandwiched between 2 RuvA tetramers; dsDNA enters through RuvA and exits via RuvB. An RuvB hexamer assembles on each DNA strand where it exits the tetramer. Each RuvB hexamer is contacted by two RuvA subunits (via domain III) on 2 adjacent RuvB subunits; this complex drives branch migration. In the full resolvosome a probable DNA-RuvA(4)-RuvB(12)-RuvC(2) complex forms which resolves the HJ.

It localises to the cytoplasm. Its function is as follows. The RuvA-RuvB-RuvC complex processes Holliday junction (HJ) DNA during genetic recombination and DNA repair, while the RuvA-RuvB complex plays an important role in the rescue of blocked DNA replication forks via replication fork reversal (RFR). RuvA specifically binds to HJ cruciform DNA, conferring on it an open structure. The RuvB hexamer acts as an ATP-dependent pump, pulling dsDNA into and through the RuvAB complex. HJ branch migration allows RuvC to scan DNA until it finds its consensus sequence, where it cleaves and resolves the cruciform DNA. In Ureaplasma urealyticum serovar 10 (strain ATCC 33699 / Western), this protein is Holliday junction branch migration complex subunit RuvA.